We begin with the raw amino-acid sequence, 351 residues long: MKLKSLLIACLLSSLSFSALADRIITDQLDRKVTIPDHINRAVVLQHQTLNIAVQLDATKQIVGVLSNWKKQLGKNYVRLAPELENMAMPGDLNSVNIESLLALKPDVVFVTNYAPSEMIKQISDVNIPVVAISLRTGEVGEKGKLNPTLTDEDKAYNDGLKQGIELIAEVFEKKQQGDELVKAAFANRKLLADRLGDVSADKRVRTYMANPDLGTYGSGKYTGLMMEHAGAYNVAAATIKGFKQVSLENVLEWNPAVILVQDRYPDVVPQILNDQGWANIQALKDKKVFLMPEYAKAWGYPMPEALALGEVWLAKALYPQRFQDVDLDKMVNDYYQKFYRTSYKPDNAAR.

The signal sequence occupies residues 1-21; the sequence is MKLKSLLIACLLSSLSFSALA. The 282-residue stretch at 41–322 folds into the Fe/B12 periplasmic-binding domain; it reads RAVVLQHQTL…WLAKALYPQR (282 aa). Molybdate contacts are provided by residues 47 to 48, Tyr217, Arg264, and 300 to 301; these read HQ and GY.

The protein belongs to the bacterial solute-binding protein 8 family. In terms of assembly, the complex is composed of two ATP-binding proteins (MolC), two transmembrane proteins (MolB) and a solute-binding protein (MolA).

The protein localises to the periplasm. Its activity is regulated as follows. The MolBCA complex shows a decrease in affinity in the presence of increasing concentrations of substrate and nucleotide. Part of the ABC transporter complex MolBCA involved in molybdate import. Functions as a low-affinity molybdate transporter. Binds to both molybdate and tungstate, but not to sulfate or phosphate. The chain is Molybdate-binding protein MolA from Haemophilus influenzae (strain ATCC 51907 / DSM 11121 / KW20 / Rd).